Consider the following 301-residue polypeptide: Small ribosomal subunit protein uS2 (301 aa).

The interval 237–301 is disordered; that stretch reads PTESWNDTVV…QDWSNSTSQW (65 aa). A compositionally biased stretch (low complexity) spans 264–278; sequence PQYAPAPQAAAAPVA.

Belongs to the universal ribosomal protein uS2 family. As to quaternary structure, component of the small ribosomal subunit. Mature ribosomes consist of a small (40S) and a large (60S) subunit. The 40S subunit contains about 33 different proteins and 1 molecule of RNA (18S). The 60S subunit contains about 49 different proteins and 3 molecules of RNA (28S, 5.8S and 5S). Interacts with ribosomal protein S21.

It localises to the cytoplasm. Its function is as follows. Required for the assembly and/or stability of the 40S ribosomal subunit. Required for the processing of the 20S rRNA-precursor to mature 18S rRNA in a late step of the maturation of 40S ribosomal subunits. In Diaphorina citri (Asian citrus psyllid), this protein is Small ribosomal subunit protein uS2.